Here is a 257-residue protein sequence, read N- to C-terminus: 3-dehydroquinate dehydratase (257 aa).

3-dehydroquinate is bound by residues 50–52 and arginine 86; that span reads EWR. Histidine 147 acts as the Proton donor/acceptor in catalysis. The active-site Schiff-base intermediate with substrate is lysine 174. Residues arginine 216, serine 235, and glutamine 239 each coordinate 3-dehydroquinate.

It belongs to the type-I 3-dehydroquinase family. As to quaternary structure, homodimer.

The catalysed reaction is 3-dehydroquinate = 3-dehydroshikimate + H2O. Its pathway is metabolic intermediate biosynthesis; chorismate biosynthesis; chorismate from D-erythrose 4-phosphate and phosphoenolpyruvate: step 3/7. Functionally, involved in the third step of the chorismate pathway, which leads to the biosynthesis of aromatic amino acids. Catalyzes the cis-dehydration of 3-dehydroquinate (DHQ) and introduces the first double bond of the aromatic ring to yield 3-dehydroshikimate. This chain is 3-dehydroquinate dehydratase, found in Geobacillus thermodenitrificans (strain NG80-2).